The following is a 348-amino-acid chain: Rhodopsin (348 aa).

Topologically, residues 1–33 are extracellular; the sequence is TEGPFFYIPMVNTSGVVRSPYEYPQYYLVNPAA. A glycan (N-linked (GlcNAc...) asparagine) is linked at Asn-12. The helical transmembrane segment at 34 to 58 threads the bilayer; that stretch reads YAILGAYMFFLIIIGFPVNFMTLYV. Topologically, residues 59 to 70 are cytoplasmic; that stretch reads TLEHKKLRTPLN. A helical membrane pass occupies residues 71–93; the sequence is YILLNLAVADLFMVIGGFTTTMY. Over 94-107 the chain is Extracellular; it reads SSMHGYFVLGRLGC. A disulfide bridge links Cys-107 with Cys-184. A helical membrane pass occupies residues 108–130; the sequence is NMEGFSATLGGMISLWSLAVLAI. The short motif at 131–133 is the 'Ionic lock' involved in activated form stabilization element; it reads ERW. Residues 131–149 lie on the Cytoplasmic side of the membrane; sequence ERWVVVCKPISNFRFGENH. The helical transmembrane segment at 150–170 threads the bilayer; the sequence is AIMGVSLTWFMALACTVPPLV. The Extracellular portion of the chain corresponds to 171 to 199; that stretch reads GWSRYIPEGMQCSCGIDYYTRAEGFNNES. The N-linked (GlcNAc...) asparagine glycan is linked to Asn-197. A helical transmembrane segment spans residues 200–221; it reads FVLYMFFCHFLVPLVIIFFCYG. At 222-249 the chain is on the cytoplasmic side; sequence RLLCAVKEAAAAQQESETTQRAEREVTR. The helical transmembrane segment at 250 to 271 threads the bilayer; sequence MVIIMVIGFLVCWLPYASVAWF. Over 272–283 the chain is Extracellular; that stretch reads IFTHQGSEFGPL. The chain crosses the membrane as a helical span at residues 284-305; it reads FMTIPAFFAKSSSIYNPMIYIC. Lys-293 is modified (N6-(retinylidene)lysine). The Cytoplasmic segment spans residues 306 to 348; it reads MNKQFRNCMITTLFCGKNPFEGEEEGASSTKTEASSASSVSPA. The S-palmitoyl cysteine moiety is linked to residue Cys-320. A disordered region spans residues 327–348; the sequence is GEEEGASSTKTEASSASSVSPA. Low complexity predominate over residues 332–348; the sequence is ASSTKTEASSASSVSPA.

It belongs to the G-protein coupled receptor 1 family. Opsin subfamily. Phosphorylated on some or all of the serine and threonine residues present in the C-terminal region. Post-translationally, contains one covalently linked retinal chromophore.

Its subcellular location is the membrane. It is found in the cell projection. The protein resides in the cilium. It localises to the photoreceptor outer segment. Its function is as follows. Photoreceptor required for image-forming vision at low light intensity. While most salt water fish species use retinal as chromophore, most freshwater fish use 3-dehydroretinal, or a mixture of retinal and 3-dehydroretinal. Light-induced isomerization of 11-cis to all-trans retinal triggers a conformational change that activates signaling via G-proteins. Subsequent receptor phosphorylation mediates displacement of the bound G-protein alpha subunit by arrestin and terminates signaling. In Sargocentron punctatissimum (Speckled squirrelfish), this protein is Rhodopsin (rho).